A 219-amino-acid chain; its full sequence is Ribosomal RNA small subunit methyltransferase I (219 aa).

This sequence belongs to the methyltransferase superfamily. RsmI family.

It localises to the cytoplasm. The catalysed reaction is cytidine(1402) in 16S rRNA + S-adenosyl-L-methionine = 2'-O-methylcytidine(1402) in 16S rRNA + S-adenosyl-L-homocysteine + H(+). Its function is as follows. Catalyzes the 2'-O-methylation of the ribose of cytidine 1402 (C1402) in 16S rRNA. The sequence is that of Ribosomal RNA small subunit methyltransferase I from Coprothermobacter proteolyticus (strain ATCC 35245 / DSM 5265 / OCM 4 / BT).